The chain runs to 590 residues: Arginine--tRNA ligase (590 aa).

The 'HIGH' region signature appears at 132–142 (PNTNKPLHLGH).

Belongs to the class-I aminoacyl-tRNA synthetase family. Monomer.

It localises to the cytoplasm. It carries out the reaction tRNA(Arg) + L-arginine + ATP = L-arginyl-tRNA(Arg) + AMP + diphosphate. The protein is Arginine--tRNA ligase of Treponema denticola (strain ATCC 35405 / DSM 14222 / CIP 103919 / JCM 8153 / KCTC 15104).